A 299-amino-acid chain; its full sequence is MGAIASMGPLFSLMILLAATSELLAACWRNLVLGVVQGLTEFLPISSTAHLKVVPMLVGWGDPGVSATAVIQLGSILAVIAYFKRDLAEVLKGIALAFKHGQWREPNARLGLAIAIGTMPILLAGMAIKLFWPGYEASSIRSLPSIAVVSIVMALLLALAESFGPRLKQMHLVKGRDGFVVGLAQALALIPGVSRSGSTLTASLFDGWQRQDAARFCFLLGIPAITLAGLVELKDAFAELSLGGVLPLLVGIVSAAFVSWLAIDWLLKYLQSHSTWIFVVYRLLFGVLVLAWWLSGRSN.

Helical transmembrane passes span Leu10–Val32, Pro63–Phe83, Leu112–Trp132, Leu143–Phe163, Gly178–Ser198, Ala213–Leu233, Gly243–Ile263, and Trp276–Gly296.

The protein belongs to the UppP family.

It localises to the cell inner membrane. The catalysed reaction is di-trans,octa-cis-undecaprenyl diphosphate + H2O = di-trans,octa-cis-undecaprenyl phosphate + phosphate + H(+). Functionally, catalyzes the dephosphorylation of undecaprenyl diphosphate (UPP). Confers resistance to bacitracin. This Prochlorococcus marinus (strain MIT 9313) protein is Undecaprenyl-diphosphatase.